A 787-amino-acid polypeptide reads, in one-letter code: Phenylalanine--tRNA ligase beta subunit (787 aa).

Residues 38–151 (GQDPAPFVVA…SDYEVGDSFF (114 aa)) form the tRNA-binding domain. The B5 domain maps to 397 to 474 (SEGRVISFNP…RMHGYDKVQE (78 aa)). Residues Asp452, Asp458, Glu461, and Glu462 each contribute to the Mg(2+) site. One can recognise an FDX-ACB domain in the interval 694 to 785 (HKYQPVKRDF…VAQKLGGELR (92 aa)).

This sequence belongs to the phenylalanyl-tRNA synthetase beta subunit family. Type 1 subfamily. In terms of assembly, tetramer of two alpha and two beta subunits. Mg(2+) serves as cofactor.

It is found in the cytoplasm. The catalysed reaction is tRNA(Phe) + L-phenylalanine + ATP = L-phenylalanyl-tRNA(Phe) + AMP + diphosphate + H(+). The sequence is that of Phenylalanine--tRNA ligase beta subunit from Anaplasma marginale (strain St. Maries).